A 184-amino-acid chain; its full sequence is ATP synthase subunit b, chloroplastic (184 aa).

The chain crosses the membrane as a helical span at residues 27–49; the sequence is LATNPINLSVVLGVLIFFGKGVL.

Belongs to the ATPase B chain family. In terms of assembly, F-type ATPases have 2 components, F(1) - the catalytic core - and F(0) - the membrane proton channel. F(1) has five subunits: alpha(3), beta(3), gamma(1), delta(1), epsilon(1). F(0) has four main subunits: a(1), b(1), b'(1) and c(10-14). The alpha and beta chains form an alternating ring which encloses part of the gamma chain. F(1) is attached to F(0) by a central stalk formed by the gamma and epsilon chains, while a peripheral stalk is formed by the delta, b and b' chains.

The protein resides in the plastid. It is found in the chloroplast thylakoid membrane. Functionally, f(1)F(0) ATP synthase produces ATP from ADP in the presence of a proton or sodium gradient. F-type ATPases consist of two structural domains, F(1) containing the extramembraneous catalytic core and F(0) containing the membrane proton channel, linked together by a central stalk and a peripheral stalk. During catalysis, ATP synthesis in the catalytic domain of F(1) is coupled via a rotary mechanism of the central stalk subunits to proton translocation. Its function is as follows. Component of the F(0) channel, it forms part of the peripheral stalk, linking F(1) to F(0). The sequence is that of ATP synthase subunit b, chloroplastic from Nicotiana tomentosiformis (Tobacco).